A 348-amino-acid polypeptide reads, in one-letter code: Dihydroorotase (348 aa).

The Zn(2+) site is built by H14 and H16. Substrate-binding positions include H16–R18 and N42. Zn(2+) contacts are provided by K100, H137, and H175. K100 carries the post-translational modification N6-carboxylysine. H137 serves as a coordination point for substrate. L220 contributes to the substrate binding site. D248 lines the Zn(2+) pocket. Residue D248 is part of the active site. Substrate contacts are provided by H252 and A264.

It belongs to the metallo-dependent hydrolases superfamily. DHOase family. Class II DHOase subfamily. Homodimer. Zn(2+) serves as cofactor.

The enzyme catalyses (S)-dihydroorotate + H2O = N-carbamoyl-L-aspartate + H(+). It participates in pyrimidine metabolism; UMP biosynthesis via de novo pathway; (S)-dihydroorotate from bicarbonate: step 3/3. Catalyzes the reversible cyclization of carbamoyl aspartate to dihydroorotate. This is Dihydroorotase from Azotobacter vinelandii (strain DJ / ATCC BAA-1303).